A 30-amino-acid polypeptide reads, in one-letter code: Chassatide C9 (30 aa).

Residues 1-30 constitute a cross-link (cyclopeptide (Gly-Asn)); the sequence is GIPCGESCVFIPCVTTVIGCSCKDKVCYNN. 3 cysteine pairs are disulfide-bonded: Cys4–Cys20, Cys8–Cys22, and Cys13–Cys27.

Post-translationally, this is a cyclic peptide.

In terms of biological role, probably participates in a plant defense mechanism. The sequence is that of Chassatide C9 from Chassalia chartacea (Chassalia curviflora).